Reading from the N-terminus, the 786-residue chain is Leucine-rich repeat extensin-like protein 2 (786 aa).

Positions 1-28 (MLLFPSTSLRLFFFLFLLFSSCFLQIRG) are cleaved as a signal peptide. Residues asparagine 73 and asparagine 79 are each glycosylated (N-linked (GlcNAc...) asparagine). LRR repeat units lie at residues 100 to 124 (TRVV…LGLL), 125 to 147 (TDLA…TFKH), 149 to 172 (KLLF…VLSL), 173 to 196 (PSLK…LFDK), 198 to 219 (LDAI…MGNS), 221 to 243 (VSAL…GLMG), 244 to 267 (KTLN…IGNL), 268 to 291 (KNVT…IGNM), and 292 to 315 (KSLE…ICQL). Residues asparagine 255 and asparagine 269 are each glycosylated (N-linked (GlcNAc...) asparagine). N-linked (GlcNAc...) asparagine glycans are attached at residues asparagine 320 and asparagine 346. 4 disordered regions span residues 352–372 (IDGK…SRSV), 390–589 (FKMS…YYAV), 624–645 (PPVY…YYPP), and 694–786 (PPPS…IPYY). The segment covering 353 to 362 (DGKEDQRSSK) has biased composition (basic and acidic residues). The tract at residues 384–786 (SPPPPSFKMS…SPPPPSIPYY (403 aa)) is contains the Ser-Pro(4) repeats. Composition is skewed to pro residues over residues 460–477 (YPPP…PPPS), 487–542 (YPPP…PPPK), and 566–589 (SPPP…YYAV). 4 stretches are compositionally biased toward pro residues: residues 694–713 (PPPS…PPST), 720–737 (PASP…PPPK), 752–769 (PTPP…PLPP), and 777–786 (SPPPPSIPYY).

Hydroxylated on proline residues in the S-P-P-P-P repeat. In terms of processing, O-glycosylated on hydroxyprolines. As to expression, mostly expressed in roots, also present in stems at low levels. In roots, confined to differentiation zones, the collet, and meristematic cells of tips.

It localises to the secreted. It is found in the cell wall. Functionally, modulates cell morphogenesis by regulating cell wall formation and assembly, and/or growth polarization. Together with LRX2, component of the extracellular mechanism regulating root hair morphogenesis and elongation. This chain is Leucine-rich repeat extensin-like protein 2 (LRX2), found in Arabidopsis thaliana (Mouse-ear cress).